The sequence spans 396 residues: Elongation factor Tu (396 aa).

One can recognise a tr-type G domain in the interval 10–206; sequence KPHCNIGTIG…TVDAYIPQPE (197 aa). Residues 19–26 are G1; that stretch reads GHVDHGKT. 19–26 contacts GTP; that stretch reads GHVDHGKT. Mg(2+) is bound at residue T26. Positions 60 to 64 are G2; that stretch reads GITIS. The interval 81-84 is G3; that stretch reads DCPG. GTP is bound by residues 81–85 and 136–139; these read DCPGH and NKVD. The interval 136-139 is G4; it reads NKVD. Positions 174–176 are G5; it reads SAL.

This sequence belongs to the TRAFAC class translation factor GTPase superfamily. Classic translation factor GTPase family. EF-Tu/EF-1A subfamily. As to quaternary structure, monomer.

It localises to the cytoplasm. It catalyses the reaction GTP + H2O = GDP + phosphate + H(+). Its function is as follows. GTP hydrolase that promotes the GTP-dependent binding of aminoacyl-tRNA to the A-site of ribosomes during protein biosynthesis. The protein is Elongation factor Tu of Methylocella silvestris (strain DSM 15510 / CIP 108128 / LMG 27833 / NCIMB 13906 / BL2).